We begin with the raw amino-acid sequence, 241 residues long: MNPMGRKWANIVAKKTAKDGANSKIYAKFGVEIYVAAKQGEPDPESNSALKFVLERAKQAQVPKHVIDKAIDKAKGNTDETFVEGRYEGFGPNGSMIIVDTLTSNVNRTAANVRTAFGKNGGNMGASGSVSYMFDKKGVIVFAGEDADAIFEQLLEADVDVEDVEAEDGSITVYTEPTDLHKALEALRANGQEEFQVTELEMIPQTEVTLEGEDLETFKGLIDALEADDDVQKVYHNVADM.

It belongs to the TACO1 family. YeeN subfamily.

Its subcellular location is the cytoplasm. This is Probable transcriptional regulatory protein str0195 from Streptococcus thermophilus (strain CNRZ 1066).